Reading from the N-terminus, the 391-residue chain is Sister chromatid cohesion protein DCC1 (391 aa).

This sequence belongs to the DCC1 family. Component of the ctf18-RFC complex which consists of ctf18, ctf8, dscc1 and the RFC complex.

It is found in the nucleus. Its function is as follows. Loads pcna onto primed templates regulating velocity, spacing and restart activity of replication forks. May couple DNA replication to sister chromatid cohesion. This chain is Sister chromatid cohesion protein DCC1 (dscc1), found in Xenopus tropicalis (Western clawed frog).